Here is a 1417-residue protein sequence, read N- to C-terminus: DNA-directed RNA polymerase subunit beta' (1417 aa).

Positions 71, 73, 86, and 89 each coordinate Zn(2+). Asp461, Asp463, and Asp465 together coordinate Mg(2+). Residues Cys815, Cys889, Cys896, and Cys899 each coordinate Zn(2+).

The protein belongs to the RNA polymerase beta' chain family. The RNAP catalytic core consists of 2 alpha, 1 beta, 1 beta' and 1 omega subunit. When a sigma factor is associated with the core the holoenzyme is formed, which can initiate transcription. Mg(2+) serves as cofactor. It depends on Zn(2+) as a cofactor.

It carries out the reaction RNA(n) + a ribonucleoside 5'-triphosphate = RNA(n+1) + diphosphate. Its function is as follows. DNA-dependent RNA polymerase catalyzes the transcription of DNA into RNA using the four ribonucleoside triphosphates as substrates. The polypeptide is DNA-directed RNA polymerase subunit beta' (Pasteurella multocida (strain Pm70)).